The primary structure comprises 406 residues: 5-cytosine rRNA methyltransferase NSUN4 (406 aa).

S-adenosyl-L-methionine is bound by residues Gly-207, Gly-208, Lys-209, Asp-226, Arg-231, Asp-259, Gly-260, and Asp-277. Cys-332 serves as the catalytic Nucleophile.

Belongs to the class I-like SAM-binding methyltransferase superfamily. RsmB/NOP family.

The protein resides in the mitochondrion. It catalyses the reaction a cytidine in rRNA + S-adenosyl-L-methionine = a 5-methylcytidine in rRNA + S-adenosyl-L-homocysteine + H(+). The catalysed reaction is a cytidine in mRNA + S-adenosyl-L-methionine = a 5-methylcytidine in mRNA + S-adenosyl-L-homocysteine + H(+). Its function is as follows. Mitochondrial RNA cytosine C(5)-methyltransferase that methylates cytosine to 5-methylcytosine (m5C) in various RNAs, such as rRNAs, mRNAs and some long non-coding RNAs (lncRNAs). Involved in mitochondrial ribosome small subunit (SSU) maturation by catalyzing methylation of mitochondrial 12S rRNA. The chain is 5-cytosine rRNA methyltransferase NSUN4 (nsun4) from Xenopus laevis (African clawed frog).